The following is a 157-amino-acid chain: NADPH-dependent 7-cyano-7-deazaguanine reductase (157 aa).

The active-site Thioimide intermediate is the Cys55. Asp62 serves as the catalytic Proton donor. Residues 77–79 (VES) and 96–97 (HE) each bind substrate.

This sequence belongs to the GTP cyclohydrolase I family. QueF type 1 subfamily.

It is found in the cytoplasm. The catalysed reaction is 7-aminomethyl-7-carbaguanine + 2 NADP(+) = 7-cyano-7-deazaguanine + 2 NADPH + 3 H(+). Its pathway is tRNA modification; tRNA-queuosine biosynthesis. Functionally, catalyzes the NADPH-dependent reduction of 7-cyano-7-deazaguanine (preQ0) to 7-aminomethyl-7-deazaguanine (preQ1). This Neisseria meningitidis serogroup A / serotype 4A (strain DSM 15465 / Z2491) protein is NADPH-dependent 7-cyano-7-deazaguanine reductase.